We begin with the raw amino-acid sequence, 779 residues long: uncharacterized protein (779 aa).

Serine 97 and serine 120 each carry phosphoserine. Over residues 125 to 135 (EIDGEDEKKSV) the composition is skewed to basic and acidic residues. The disordered stretch occupies residues 125-174 (EIDGEDEKKSVGQESITGSAKRKDRRSKTNGSKRQKAEANREPPSDISLS). Residues 144–158 (AKRKDRRSKTNGSKR) show a composition bias toward basic residues. Over residues 159 to 168 (QKAEANREPP) the composition is skewed to basic and acidic residues. ATP is bound by residues 215 to 222 (GPPGCGKT) and 533 to 540 (GPPGCGKT). Residues 759–779 (DRQKYQRLAKRWSSASTNDAD) are disordered.

The protein belongs to the AAA ATPase family.

The protein resides in the nucleus. This is an uncharacterized protein from Schizosaccharomyces pombe (strain 972 / ATCC 24843) (Fission yeast).